A 276-amino-acid polypeptide reads, in one-letter code: Large ribosomal subunit protein uL2 (276 aa).

Disordered regions lie at residues 33–55 (LVEA…RHIG) and 221–276 (RGTA…AKKK).

The protein belongs to the universal ribosomal protein uL2 family. Part of the 50S ribosomal subunit. Forms a bridge to the 30S subunit in the 70S ribosome.

One of the primary rRNA binding proteins. Required for association of the 30S and 50S subunits to form the 70S ribosome, for tRNA binding and peptide bond formation. It has been suggested to have peptidyltransferase activity; this is somewhat controversial. Makes several contacts with the 16S rRNA in the 70S ribosome. In Psychrobacter sp. (strain PRwf-1), this protein is Large ribosomal subunit protein uL2.